A 217-amino-acid polypeptide reads, in one-letter code: LexA repressor (217 aa).

The segment at residues 26-46 (FEEMKLALDLKSKSGIHRLIK) is a DNA-binding region (H-T-H motif). Residues serine 138 and lysine 176 each act as for autocatalytic cleavage activity in the active site.

The protein belongs to the peptidase S24 family. In terms of assembly, homodimer.

It catalyses the reaction Hydrolysis of Ala-|-Gly bond in repressor LexA.. Functionally, represses a number of genes involved in the response to DNA damage (SOS response), including recA and lexA. In the presence of single-stranded DNA, RecA interacts with LexA causing an autocatalytic cleavage which disrupts the DNA-binding part of LexA, leading to derepression of the SOS regulon and eventually DNA repair. This Zymomonas mobilis subsp. mobilis (strain ATCC 31821 / ZM4 / CP4) protein is LexA repressor.